Here is a 448-residue protein sequence, read N- to C-terminus: Homogentisate 1,2-dioxygenase (448 aa).

The active-site Proton acceptor is His-303. Fe cation-binding residues include His-346 and Glu-352. Tyr-361 and His-382 together coordinate homogentisate. His-382 is a Fe cation binding site.

This sequence belongs to the homogentisate dioxygenase family. As to quaternary structure, hexamer; dimer of trimers. It depends on Fe cation as a cofactor.

The catalysed reaction is homogentisate + O2 = 4-maleylacetoacetate + H(+). Its pathway is amino-acid degradation; L-phenylalanine degradation; acetoacetate and fumarate from L-phenylalanine: step 4/6. In terms of biological role, involved in the catabolism of homogentisate (2,5-dihydroxyphenylacetate or 2,5-OH-PhAc), a central intermediate in the degradation of phenylalanine and tyrosine. Catalyzes the oxidative ring cleavage of the aromatic ring of homogentisate to yield maleylacetoacetate. This is Homogentisate 1,2-dioxygenase from Rhodopseudomonas palustris (strain BisB18).